The chain runs to 95 residues: Hge-scorpine (95 aa).

Positions 1 to 19 (MNTKLTVLCFLGIVTIVSC) are cleaved as a signal peptide. The BetaSPN-type CS-alpha/beta domain maps to 55-94 (QFGCFANVDVKGDCKRHCKAEDKEGICHGTKCKCGVPISY). 3 cysteine pairs are disulfide-bonded: C58–C81, C68–C86, and C72–C88.

The protein belongs to the long chain scorpion toxin family. Class 3 subfamily. Expressed by the venom gland.

It localises to the secreted. In terms of biological role, has antibacterial activity against B.subtilis, but not against S.aureus. Also has hemolytic and cytolytic activities. Since cell lysis occurs at the tested concentrations, observation of activity on potassium channels is impossible. Blocks Kv1.1/KCNA1 (IC(50)=185 nM) potassium channels. Shows a weak hemolytic activity. The chain is Hge-scorpine from Hoffmannihadrurus gertschi (Scorpion).